We begin with the raw amino-acid sequence, 316 residues long: MPGQNYSTISEFILFGFSAFPHQMLPALFLLYLLMYLFTLLGNLVIMAAIWTEHRLHTPMYLFLCALSISEILFTVVITPRMLSDMLSTHRSITFIACANQLFFSFTFGYTHSFLLVVMGYDRYVAICRPLHYHALMSLQGCARLVAWSWAGGSLIGMALTIIIFHLTFCESNVIHHILCHVFSLLKLACGERTAFVTIAVILVCVTPLIGCLVFIILSYIFIVAAILRIPSTEGRHKTFSTCASHLTVVIVHYGFASIIYLKSRGLYSQYTDTLMSTTYTVFTPFLSPIIFSLRNKELKNAIIKSFHRNVCQQSI.

Residues 1-26 lie on the Extracellular side of the membrane; it reads MPGQNYSTISEFILFGFSAFPHQMLP. Asn5 is a glycosylation site (N-linked (GlcNAc...) asparagine). Residues 27 to 47 form a helical membrane-spanning segment; the sequence is ALFLLYLLMYLFTLLGNLVIM. Residues 48–57 lie on the Cytoplasmic side of the membrane; that stretch reads AAIWTEHRLH. Residues 58 to 78 form a helical membrane-spanning segment; sequence TPMYLFLCALSISEILFTVVI. Over 79-100 the chain is Extracellular; the sequence is TPRMLSDMLSTHRSITFIACAN. Cys98 and Cys190 are disulfide-bonded. The chain crosses the membrane as a helical span at residues 101-121; it reads QLFFSFTFGYTHSFLLVVMGY. The Cytoplasmic portion of the chain corresponds to 122-144; sequence DRYVAICRPLHYHALMSLQGCAR. Residues 145–165 traverse the membrane as a helical segment; the sequence is LVAWSWAGGSLIGMALTIIIF. The Extracellular segment spans residues 166 to 207; that stretch reads HLTFCESNVIHHILCHVFSLLKLACGERTAFVTIAVILVCVT. A helical membrane pass occupies residues 208–228; it reads PLIGCLVFIILSYIFIVAAIL. The Cytoplasmic portion of the chain corresponds to 229 to 241; the sequence is RIPSTEGRHKTFS. The helical transmembrane segment at 242–262 threads the bilayer; that stretch reads TCASHLTVVIVHYGFASIIYL. Topologically, residues 263–273 are extracellular; it reads KSRGLYSQYTD. The chain crosses the membrane as a helical span at residues 274–294; it reads TLMSTTYTVFTPFLSPIIFSL. At 295–316 the chain is on the cytoplasmic side; it reads RNKELKNAIIKSFHRNVCQQSI.

This sequence belongs to the G-protein coupled receptor 1 family.

The protein resides in the cell membrane. Its function is as follows. Odorant receptor. This Mus musculus (Mouse) protein is Olfactory receptor 10H28.